The sequence spans 482 residues: Glycogen synthase (482 aa).

Residue K21 participates in ADP-alpha-D-glucose binding.

This sequence belongs to the glycosyltransferase 1 family. Bacterial/plant glycogen synthase subfamily.

The catalysed reaction is [(1-&gt;4)-alpha-D-glucosyl](n) + ADP-alpha-D-glucose = [(1-&gt;4)-alpha-D-glucosyl](n+1) + ADP + H(+). It functions in the pathway glycan biosynthesis; glycogen biosynthesis. In terms of biological role, synthesizes alpha-1,4-glucan chains using ADP-glucose. The sequence is that of Glycogen synthase from Clostridium perfringens (strain 13 / Type A).